The sequence spans 479 residues: Ribosomal RNA small subunit methyltransferase F (479 aa).

S-adenosyl-L-methionine is bound by residues 125–131, glutamate 149, aspartate 176, and aspartate 194; that span reads AAAPGSK. Residue cysteine 247 is the Nucleophile of the active site.

The protein belongs to the class I-like SAM-binding methyltransferase superfamily. RsmB/NOP family.

It localises to the cytoplasm. It catalyses the reaction cytidine(1407) in 16S rRNA + S-adenosyl-L-methionine = 5-methylcytidine(1407) in 16S rRNA + S-adenosyl-L-homocysteine + H(+). Functionally, specifically methylates the cytosine at position 1407 (m5C1407) of 16S rRNA. This is Ribosomal RNA small subunit methyltransferase F from Shigella boydii serotype 4 (strain Sb227).